The chain runs to 138 residues: MAKEYSRTQRIGDQMQRELAQLIRREIKDPRVGLVTITAVDVSRDVGHAKIFMTVMGQDNAEDIAQTIKVLNAAAGFLRMQLAREMKLRSVPQLHFHYDESVVRGAHLSALIERAVAQDSQHQEGPASPDAKPESTEE.

Residues 116–138 form a disordered region; that stretch reads VAQDSQHQEGPASPDAKPESTEE.

Belongs to the RbfA family. Monomer. Binds 30S ribosomal subunits, but not 50S ribosomal subunits or 70S ribosomes.

The protein localises to the cytoplasm. Its function is as follows. One of several proteins that assist in the late maturation steps of the functional core of the 30S ribosomal subunit. Associates with free 30S ribosomal subunits (but not with 30S subunits that are part of 70S ribosomes or polysomes). Required for efficient processing of 16S rRNA. May interact with the 5'-terminal helix region of 16S rRNA. This chain is Ribosome-binding factor A, found in Pseudomonas syringae pv. tomato (strain ATCC BAA-871 / DC3000).